We begin with the raw amino-acid sequence, 84 residues long: Beta-cardiotoxin CTX27 (84 aa).

The signal sequence occupies residues 1–21; it reads MKTLLLTLVVVTIVCLDLGYT. Cystine bridges form between Cys24–Cys43, Cys36–Cys61, Cys65–Cys76, and Cys77–Cys82.

It belongs to the three-finger toxin family. Short-chain subfamily. Aminergic toxin sub-subfamily. Expressed by the venom gland.

The protein localises to the secreted. Functionally, acts as a beta-blocker by binding to beta-1 and beta-2 adrenergic receptors (ADRB1 and ADRB2). It dose-dependently decreases the heart rate (bradycardia), whereas conventional cardiotoxins increases it. At 100 mg/kg, intraperitoneal injection into mice provokes labored breathing, impaired locomotion, lack of response to external stimuli, and death (after 30 minutes). This is Beta-cardiotoxin CTX27 from Ophiophagus hannah (King cobra).